The chain runs to 1096 residues: Lysine-specific demethylase PHF2 (1096 aa).

The segment at 5-56 adopts a PHD-type zinc-finger fold; sequence PVYCVCRLPYDVTRFMIECDACKDWFHGSCVGVEEEEAPDIDIYHCPNCEKT. 2-oxoglutarate is bound by residues threonine 193 and threonine 246. The JmjC domain maps to 197–353; it reads FSDTRMSSFV…MQMRAYEVER (157 aa). Fe cation is bound by residues histidine 249 and aspartate 251. 2 residues coordinate 2-oxoglutarate: tyrosine 259 and lysine 266. Tyrosine 321 contributes to the Fe cation binding site. Residue threonine 323 participates in 2-oxoglutarate binding. The segment at 448–630 is disordered; it reads TVRPEVNAAA…KSPLAGNKDK (183 aa). Serine 474 is subject to Phosphoserine. Threonine 479 is modified (phosphothreonine). Residues 503–515 show a composition bias toward pro residues; sequence SKIPKPPKSPKPP. Serine 536 is subject to Phosphoserine. Composition is skewed to basic and acidic residues over residues 545–560 and 575–630; these read LEAH…EPPK and DTVH…NKDK. 3 positions are modified to phosphoserine: serine 651, serine 677, and serine 701. Lysine 707 participates in a covalent cross-link: Glycyl lysine isopeptide (Lys-Gly) (interchain with G-Cter in SUMO2). Residue lysine 716 is modified to N6-acetyllysine. Disordered stretches follow at residues 719–755, 811–841, and 871–1080; these read LDSA…ESGS, WGTG…KRLL, and YPSL…TAKQ. Tyrosine 724 is modified (phosphotyrosine). The segment covering 725-753 has biased composition (basic and acidic residues); it reads KSDDSSDEGSLHIDTDTKPGRNAKVKKES. Phosphoserine is present on residues serine 726, serine 729, serine 730, and serine 734. 3 positions are modified to phosphoserine: serine 873, serine 876, and serine 893. The span at 910 to 919 shows a compositional bias: basic and acidic residues; that stretch reads RQDRPVREGT. Basic residues predominate over residues 943 to 953; the sequence is NRKKKNTKRKP. The span at 954 to 1010 shows a compositional bias: low complexity; it reads APNTASPSISTSASASTGTTSASTTPASTTPASTTPASTTPASTSTASSQASQEGSS. Polar residues-rich tracts occupy residues 1031–1040 and 1054–1065; these read GTFSGSQAGR and RRPSASSPNNTA. Phosphoserine; by PKA is present on serine 1057.

The protein belongs to the JHDM1 histone demethylase family. JHDM1D subfamily. In terms of assembly, component of the PHF2-ARID5B complex, at least composed of PHF2 and ARID5B. Interacts with HNF4A and NR1H4. Interacts with RELA. Post-translationally, phosphorylated by PKA on specific serine residues, leading to the formation of an active lysine demethylase complex.

It localises to the nucleus. Its subcellular location is the nucleolus. The protein resides in the chromosome. The protein localises to the centromere. It is found in the kinetochore. The enzyme catalyses N(6),N(6)-dimethyl-L-lysyl(9)-[histone H3] + 2-oxoglutarate + O2 = N(6)-methyl-L-lysyl(9)-[histone H3] + formaldehyde + succinate + CO2. Its activity is regulated as follows. Enzymatically inactive by itself, and become active following phosphorylation by PKA. Its function is as follows. Lysine demethylase that demethylates both histones and non-histone proteins. Enzymatically inactive by itself, and becomes active following phosphorylation by PKA: forms a complex with ARID5B and mediates demethylation of methylated ARID5B. Demethylation of ARID5B leads to target the PHF2-ARID5B complex to target promoters, where PHF2 mediates demethylation of dimethylated 'Lys-9' of histone H3 (H3K9me2), followed by transcription activation of target genes. The PHF2-ARID5B complex acts as a coactivator of HNF4A in liver. PHF2 is recruited to trimethylated 'Lys-4' of histone H3 (H3K4me3) at rDNA promoters and promotes expression of rDNA. Involved in the activation of toll-like receptor 4 (TLR4)-target inflammatory genes in macrophages by catalyzing the demethylation of trimethylated histone H4 lysine 20 (H4K20me3) at the gene promoters. The chain is Lysine-specific demethylase PHF2 (Phf2) from Mus musculus (Mouse).